We begin with the raw amino-acid sequence, 328 residues long: H-2 class I histocompatibility antigen, K-Q alpha chain (328 aa).

The segment at 1–71 (PRFISVGYVD…LLRYYNQSAG (71 aa)) is alpha-1. Over 1-265 (PRFISVGYVD…EPPPSAVSNT (265 aa)) the chain is Extracellular. N-linked (GlcNAc...) asparagine glycosylation occurs at Asn-67. An alpha-2 region spans residues 72–163 (GSHTIQRMYG…KNGNATLLRT (92 aa)). Cys-82 and Cys-145 are joined by a disulfide. N-linked (GlcNAc...) asparagine glycosylation is present at Asn-157. Residues 164–255 (DSPKAHVTHH…GLPKPLTLRW (92 aa)) are alpha-3. The Ig-like C1-type domain occupies 166–252 (PKAHVTHHSR…YHQGLPKPLT (87 aa)). Cysteines 184 and 240 form a disulfide. The connecting peptide stretch occupies residues 256–265 (EPPPSAVSNT). Residues 266-289 (VIIAVLVVLGAAIVTGAVVAFVMM) form a helical membrane-spanning segment. The Cytoplasmic portion of the chain corresponds to 290–328 (RRRNTGGKGGDYALAPGSQTSDLSLPDCKVMVHDPHSLA). Residues Ser-310 and Ser-313 each carry the phosphoserine modification.

The protein belongs to the MHC class I family. Heterodimer of an alpha chain and a beta chain (beta-2-microglobulin).

The protein localises to the membrane. Functionally, involved in the presentation of foreign antigens to the immune system. This is H-2 class I histocompatibility antigen, K-Q alpha chain (H2-K1) from Mus musculus (Mouse).